Consider the following 788-residue polypeptide: Pre-rRNA-processing protein TSR1 homolog (788 aa).

Positions 1-40 (MSTTGHRAGVFKKPAKPHKSWKGKRTKGEITTENRGREGV) are disordered. Positions 9–25 (GVFKKPAKPHKSWKGKR) are enriched in basic residues. Positions 26–40 (TKGEITTENRGREGV) are enriched in basic and acidic residues. The Bms1-type G domain occupies 83-243 (APCLVTILSL…LRTLNETKKK (161 aa)). The disordered stretch occupies residues 354 to 433 (LEEADKEMRR…ASEMMFHDEI (80 aa)). Positions 378–412 (DDSEDDEDEEDEDEDMDDEEEDKDLEEDDEEEDTP) are enriched in acidic residues.

It belongs to the TRAFAC class translation factor GTPase superfamily. Bms1-like GTPase family. TSR1 subfamily.

The protein resides in the nucleus. It localises to the nucleolus. Its function is as follows. Required during maturation of the 40S ribosomal subunit in the nucleolus. This Caenorhabditis briggsae protein is Pre-rRNA-processing protein TSR1 homolog.